The chain runs to 420 residues: 20-oxo-5-O-mycaminosyltylactone 23-monooxygenase (420 aa).

The tract at residues Met1–Ala28 is disordered. The heme site is built by His118, Arg122, Arg311, His367, and Cys369.

It belongs to the cytochrome P450 family.

It catalyses the reaction 20-oxo-5-O-beta-D-mycaminosyltylonolide + 2 reduced [2Fe-2S]-[ferredoxin] + O2 + 2 H(+) = 5-O-beta-D-mycaminosyltylonolide + 2 oxidized [2Fe-2S]-[ferredoxin] + H2O. It functions in the pathway antibiotic biosynthesis; tylosin biosynthesis. Functionally, involved in the biosynthesis of the complex macrolide antibiotic tylosin. Catalyzes the hydroxylation of 20-oxo-5-O-beta-mycaminosyltylactone at the C-23 position to yield 5-O-beta-mycaminosyltylonolide. The sequence is that of 20-oxo-5-O-mycaminosyltylactone 23-monooxygenase from Streptomyces fradiae (Streptomyces roseoflavus).